A 75-amino-acid polypeptide reads, in one-letter code: U6-lycotoxin-Ls1b (75 aa).

The first 21 residues, 1-21 (MKLLLFTALVLVVISLIEVEA), serve as a signal peptide directing secretion. Residues 22–25 (ENER) constitute a propeptide that is removed on maturation.

This sequence belongs to the neurotoxin 19 (CSTX) family. 06 (U6-Lctx) subfamily. Post-translationally, contains 4 disulfide bonds. In terms of tissue distribution, expressed by the venom gland.

The protein localises to the secreted. The polypeptide is U6-lycotoxin-Ls1b (Lycosa singoriensis (Wolf spider)).